A 161-amino-acid chain; its full sequence is uncharacterized protein (161 aa).

An RING-type zinc finger spans residues 72–134; it reads CAICLDNLQN…EAQQTCPTCR (63 aa). Positions 140–161 are disordered; it reads DKEVEEEERQRNLEELHDSMYG.

This is an uncharacterized protein from Caenorhabditis elegans.